We begin with the raw amino-acid sequence, 508 residues long: Sugar transport protein 12 (508 aa).

Topologically, residues 1-22 (MPSVGIVIGDGKKEYPGKLTLY) are cytoplasmic. A run of 12 helical transmembrane segments spans residues 23 to 43 (VTVTCIVAAMGGLIFGYDIGI), 80 to 100 (VSLTLFTSSLYLAALCSSLVA), 118 to 138 (VLFCAGALLNGFATAVWMLIV), 141 to 161 (LLLGFGIGFTNQSVPLYLSEM), 172 to 192 (IGFQLSITIGILVANVLNFFF), 201 to 221 (LSLGGAVVPALIITVGSLILP), 294 to 314 (LTGINVIMFYAPVLFQTIGFG), 317 to 337 (AALISAVVTGLVNVGATVVSI), 347 to 367 (FLFLEGGFQMLISQVAVAAAI), 383 to 403 (WYAIVVVLFICIYVAAFAWSW), 426 to 446 (ITVSVNMIFTFLIAQVFLMML), and 451 to 471 (FGLFIFFAFFVVVMSIFVYLF). The Cytoplasmic portion of the chain corresponds to 472-508 (LPETRGVPIEEMNRVWRSHWYWSKFVDAEKNLTKVVI).

The protein belongs to the major facilitator superfamily. Sugar transporter (TC 2.A.1.1) family.

The protein localises to the membrane. Functionally, mediates an active uptake of hexoses, probably by sugar/hydrogen symport. The sequence is that of Sugar transport protein 12 (STP12) from Arabidopsis thaliana (Mouse-ear cress).